The sequence spans 728 residues: 1,4-alpha-glucan branching enzyme GlgB (728 aa).

The active-site Nucleophile is Asp405. Glu458 serves as the catalytic Proton donor.

This sequence belongs to the glycosyl hydrolase 13 family. GlgB subfamily. Monomer.

It catalyses the reaction Transfers a segment of a (1-&gt;4)-alpha-D-glucan chain to a primary hydroxy group in a similar glucan chain.. It participates in glycan biosynthesis; glycogen biosynthesis. Catalyzes the formation of the alpha-1,6-glucosidic linkages in glycogen by scission of a 1,4-alpha-linked oligosaccharide from growing alpha-1,4-glucan chains and the subsequent attachment of the oligosaccharide to the alpha-1,6 position. The chain is 1,4-alpha-glucan branching enzyme GlgB from Escherichia coli O1:K1 / APEC.